The chain runs to 291 residues: uncharacterized protein (291 aa).

The segment at 1 to 55 is disordered; sequence MRTHDIPRSPLVGHKKNAAPDGIGASRACCPARENEPFKKGSTNSRGGGVEWSRS. 2 helical membrane-spanning segments follow: residues 74-96 and 188-210; these read WWAV…PVHA and YYYL…RIRL.

It to T.pallidum TP_0733.

It localises to the cell membrane. This is an uncharacterized protein from Treponema pallidum (strain Nichols).